The sequence spans 124 residues: Small ribosomal subunit protein uS12 (124 aa).

3-methylthioaspartic acid is present on Asp89.

Belongs to the universal ribosomal protein uS12 family. In terms of assembly, part of the 30S ribosomal subunit. Contacts proteins S8 and S17. May interact with IF1 in the 30S initiation complex.

Functionally, with S4 and S5 plays an important role in translational accuracy. Its function is as follows. Interacts with and stabilizes bases of the 16S rRNA that are involved in tRNA selection in the A site and with the mRNA backbone. Located at the interface of the 30S and 50S subunits, it traverses the body of the 30S subunit contacting proteins on the other side and probably holding the rRNA structure together. The combined cluster of proteins S8, S12 and S17 appears to hold together the shoulder and platform of the 30S subunit. The polypeptide is Small ribosomal subunit protein uS12 (Shewanella amazonensis (strain ATCC BAA-1098 / SB2B)).